The chain runs to 53 residues: MTLKRSVIGRPKNQVETVKALGLKKIGDSRELADTPAIRGMIKTVQHLVEVEA.

The protein belongs to the universal ribosomal protein uL30 family. As to quaternary structure, part of the 50S ribosomal subunit.

The chain is Large ribosomal subunit protein uL30 from Deinococcus geothermalis (strain DSM 11300 / CIP 105573 / AG-3a).